The primary structure comprises 243 residues: 2-C-methyl-D-erythritol 4-phosphate cytidylyltransferase (243 aa).

The protein belongs to the IspD/TarI cytidylyltransferase family. IspD subfamily. As to quaternary structure, homodimer.

The enzyme catalyses 2-C-methyl-D-erythritol 4-phosphate + CTP + H(+) = 4-CDP-2-C-methyl-D-erythritol + diphosphate. It functions in the pathway isoprenoid biosynthesis; isopentenyl diphosphate biosynthesis via DXP pathway; isopentenyl diphosphate from 1-deoxy-D-xylulose 5-phosphate: step 2/6. Functionally, catalyzes the formation of 4-diphosphocytidyl-2-C-methyl-D-erythritol from CTP and 2-C-methyl-D-erythritol 4-phosphate (MEP). In Photorhabdus laumondii subsp. laumondii (strain DSM 15139 / CIP 105565 / TT01) (Photorhabdus luminescens subsp. laumondii), this protein is 2-C-methyl-D-erythritol 4-phosphate cytidylyltransferase.